Consider the following 374-residue polypeptide: Anhydro-N-acetylmuramic acid kinase (374 aa).

12 to 19 serves as a coordination point for ATP; that stretch reads GTSLDGVD.

The protein belongs to the anhydro-N-acetylmuramic acid kinase family.

The catalysed reaction is 1,6-anhydro-N-acetyl-beta-muramate + ATP + H2O = N-acetyl-D-muramate 6-phosphate + ADP + H(+). It participates in amino-sugar metabolism; 1,6-anhydro-N-acetylmuramate degradation. It functions in the pathway cell wall biogenesis; peptidoglycan recycling. Catalyzes the specific phosphorylation of 1,6-anhydro-N-acetylmuramic acid (anhMurNAc) with the simultaneous cleavage of the 1,6-anhydro ring, generating MurNAc-6-P. Is required for the utilization of anhMurNAc either imported from the medium or derived from its own cell wall murein, and thus plays a role in cell wall recycling. The chain is Anhydro-N-acetylmuramic acid kinase from Enterobacter sp. (strain 638).